A 190-amino-acid chain; its full sequence is GTP cyclohydrolase 1 (190 aa).

Residues C75, H78, and C146 each contribute to the Zn(2+) site.

Belongs to the GTP cyclohydrolase I family. Toroid-shaped homodecamer, composed of two pentamers of five dimers.

The enzyme catalyses GTP + H2O = 7,8-dihydroneopterin 3'-triphosphate + formate + H(+). It participates in cofactor biosynthesis; 7,8-dihydroneopterin triphosphate biosynthesis; 7,8-dihydroneopterin triphosphate from GTP: step 1/1. This chain is GTP cyclohydrolase 1, found in Campylobacter jejuni (strain RM1221).